The primary structure comprises 241 residues: Probable transcriptional regulatory protein SAR11_0592 (241 aa).

The tract at residues 1 to 24 (MSGHSKWASIKHSKGKADKQRSKV) is disordered.

Belongs to the TACO1 family.

The protein resides in the cytoplasm. In Pelagibacter ubique (strain HTCC1062), this protein is Probable transcriptional regulatory protein SAR11_0592.